Here is a 1135-residue protein sequence, read N- to C-terminus: Envelopment polyprotein (1135 aa).

Residues 1-18 form the signal peptide; it reads MGIWKWLVMASLVWPVLT. The Lumenal segment spans residues 19–485; it reads LRNVYDMKIE…VPGFHGWATA (467 aa). 11 disulfide bridges follow: cysteine 29-cysteine 151, cysteine 63-cysteine 157, cysteine 109-cysteine 128, cysteine 133-cysteine 138, cysteine 175-cysteine 185, cysteine 210-cysteine 247, cysteine 234-cysteine 351, cysteine 376-cysteine 435, cysteine 380-cysteine 389, cysteine 405-cysteine 424, and cysteine 452-cysteine 475. Asparagine 134 is a glycosylation site (N-linked (GlcNAc...) asparagine; by host). N-linked (GlcNAc...) asparagine; by host glycosylation is found at asparagine 235 and asparagine 347. N-linked (GlcNAc...) asparagine; by host glycosylation occurs at asparagine 399. A helical transmembrane segment spans residues 486–506; it reads ALLVTFCFGWVLIPAITFIIL. The Cytoplasmic segment spans residues 507 to 627; that stretch reads TVLKFIANIF…LNLFRYKSRC (121 aa). A binding to the ribonucleoprotein region spans residues 516-533; it reads FHTSNQENRLKSVLRKIK. CCHC-type zinc fingers lie at residues 545–565 and 570–591; these read CDVC…GVSC and CPYC…YKVC. 3 binding to the ribonucleoprotein regions span residues 588-605, 592-603, and 611-625; these read YKVC…KKTV, QVTHRFRDDLKK, and TPGC…RYKS. In terms of domain architecture, ITAM spans 611-634; that stretch reads TPGCYRTLNLFRYKSRCYIFTMWI. A YxxL motif is present at residues 615 to 618; the sequence is YRTL. Residues 628–648 traverse the membrane as a helical segment; the sequence is YIFTMWIFLLVLESILWAASA. The Lumenal portion of the chain corresponds to 649–1105; sequence SETPLTPVWN…EWISGIFSGN (457 aa). Intrachain disulfides connect cysteine 735-cysteine 770, cysteine 739-cysteine 777, cysteine 751-cysteine 885, cysteine 765-cysteine 896, cysteine 780-cysteine 904, cysteine 806-cysteine 815, cysteine 823-cysteine 832, and cysteine 863-cysteine 867. The tract at residues 757 to 777 is fusion loop; it reads YQYETSWGCNPSDCPGVGTGC. Residue asparagine 928 is glycosylated (N-linked (GlcNAc...) asparagine; by host). 5 disulfide bridges follow: cysteine 970–cysteine 1000, cysteine 993–cysteine 1045, cysteine 1010–cysteine 1015, cysteine 1046–cysteine 1051, and cysteine 1085–cysteine 1089. A helical transmembrane segment spans residues 1106–1126; sequence WIVLIVLCVFLLFSLVLLSIL. A binding to the ribonucleoprotein region spans residues 1122 to 1135; it reads LLSILCPVRKHKKS. Residues 1127-1135 lie on the Cytoplasmic side of the membrane; the sequence is CPVRKHKKS.

It belongs to the hantavirus envelope glycoprotein family. In terms of assembly, homodimer. Homotetramer; forms heterotetrameric Gn-Gc spikes in the pre-fusion conformation. Interacts (via C-terminus) with the nucleoprotein. Interacts with host TUFM; this interaction contributes to the virus-induced degradation of mitochondria by autophagy, which leads to degradation of host MAVS and inhibition of type I interferon (IFN) responses. Interacts with host MAP1LC3B; this interaction contributes to the virus-induced degradation of mitochondria by autophagy, which leads to degradation of host MAVS and inhibition of type I interferon (IFN) responses. Homotetramer; forms heterotetrameric Gn-Gc spikes in the pre-fusion conformation. Homotrimer; forms homotrimer in the post-fusion conformation at acidic pH. Interacts (via C-terminus) with the nucleoprotein. Specific enzymatic cleavage in vivo yield the mature proteins Glycoprotein N and Glycoprotein C.

It localises to the virion membrane. The protein resides in the host cell surface. It is found in the host Golgi apparatus membrane. Its subcellular location is the host endoplasmic reticulum membrane. The protein localises to the host mitochondrion. Forms homotetramers with glycoprotein C at the surface of the virion. Attaches the virion to host cell receptors including integrin ITGAV/ITGB3. This attachment induces virion internalization predominantly through clathrin-dependent endocytosis. May also bind to host C1QBP for virus entry into the host cell. Mediates the assembly and budding of infectious virus particles through its interaction with the nucleocapsid protein and the viral genome. May dysregulate normal immune and endothelial cell responses through an ITAM motif. Translocates to mitochondria, binds to host TUFM and recruits MAP1LC3B. These interactions induce mitochondrial autophagy and therefore destruction of host MAVS leading to inhibition of type I interferon (IFN) responses. Concomitant breakdown of glycoprotein N is apparently prevented by the nucleoprotein that may inhibit Gn-stimulated autophagosome-lysosome fusion. Interacts with the viral genomic RNA. In terms of biological role, homodimer. Homotetramer; forms heterotetrameric Gn-Gc spikes in the pre-fusion conformation. Attaches the virion to host cell receptors including integrin ITGAV/ITGB3. This attachment induces virion internalization predominantly through clathrin-dependent endocytosis. May also bind to host C1QBP for virus entry into the host cell. Class II fusion protein that promotes fusion of viral membrane with host endosomal membrane after endocytosis of the virion. This is Envelopment polyprotein (GP) from Apodemus agrarius (Eurasian field mouse).